We begin with the raw amino-acid sequence, 437 residues long: Adenylosuccinate synthetase (437 aa).

GTP is bound by residues 12–18 and 40–42; these read GDEGKGK and GHT. The Proton acceptor role is filled by Asp-13. Mg(2+) is bound by residues Asp-13 and Gly-40. Residues 13–16, 38–41, Thr-128, Arg-142, Gln-223, Thr-238, and Arg-302 contribute to the IMP site; these read DEGK and NAGH. Residue His-41 is the Proton donor of the active site. Residue 298 to 304 coordinates substrate; the sequence is TTTGRRR. GTP contacts are provided by residues Arg-304, 330 to 332, and 412 to 414; these read KLD and SLG.

Belongs to the adenylosuccinate synthetase family. In terms of assembly, homodimer. Requires Mg(2+) as cofactor.

The protein localises to the cytoplasm. The catalysed reaction is IMP + L-aspartate + GTP = N(6)-(1,2-dicarboxyethyl)-AMP + GDP + phosphate + 2 H(+). It participates in purine metabolism; AMP biosynthesis via de novo pathway; AMP from IMP: step 1/2. Its function is as follows. Plays an important role in the de novo pathway of purine nucleotide biosynthesis. Catalyzes the first committed step in the biosynthesis of AMP from IMP. This chain is Adenylosuccinate synthetase, found in Synechococcus sp. (strain RCC307).